We begin with the raw amino-acid sequence, 66 residues long: Large ribosomal subunit protein uL29 (66 aa).

This sequence belongs to the universal ribosomal protein uL29 family.

The polypeptide is Large ribosomal subunit protein uL29 (Thermosipho melanesiensis (strain DSM 12029 / CIP 104789 / BI429)).